The primary structure comprises 324 residues: Aspartate carbamoyltransferase catalytic subunit (324 aa).

2 residues coordinate carbamoyl phosphate: arginine 71 and threonine 72. Residue lysine 99 participates in L-aspartate binding. Positions 121, 151, and 154 each coordinate carbamoyl phosphate. L-aspartate-binding residues include arginine 184 and arginine 239. Residues glycine 280 and proline 281 each coordinate carbamoyl phosphate.

Belongs to the aspartate/ornithine carbamoyltransferase superfamily. ATCase family. As to quaternary structure, heterododecamer (2C3:3R2) of six catalytic PyrB chains organized as two trimers (C3), and six regulatory PyrI chains organized as three dimers (R2).

The catalysed reaction is carbamoyl phosphate + L-aspartate = N-carbamoyl-L-aspartate + phosphate + H(+). It functions in the pathway pyrimidine metabolism; UMP biosynthesis via de novo pathway; (S)-dihydroorotate from bicarbonate: step 2/3. In terms of biological role, catalyzes the condensation of carbamoyl phosphate and aspartate to form carbamoyl aspartate and inorganic phosphate, the committed step in the de novo pyrimidine nucleotide biosynthesis pathway. The sequence is that of Aspartate carbamoyltransferase catalytic subunit from Cupriavidus necator (strain ATCC 17699 / DSM 428 / KCTC 22496 / NCIMB 10442 / H16 / Stanier 337) (Ralstonia eutropha).